The following is a 217-amino-acid chain: 2-C-methyl-D-erythritol 4-phosphate cytidylyltransferase (217 aa).

Belongs to the IspD/TarI cytidylyltransferase family. IspD subfamily.

It carries out the reaction 2-C-methyl-D-erythritol 4-phosphate + CTP + H(+) = 4-CDP-2-C-methyl-D-erythritol + diphosphate. It functions in the pathway isoprenoid biosynthesis; isopentenyl diphosphate biosynthesis via DXP pathway; isopentenyl diphosphate from 1-deoxy-D-xylulose 5-phosphate: step 2/6. Catalyzes the formation of 4-diphosphocytidyl-2-C-methyl-D-erythritol from CTP and 2-C-methyl-D-erythritol 4-phosphate (MEP). The sequence is that of 2-C-methyl-D-erythritol 4-phosphate cytidylyltransferase from Chlamydia abortus (strain DSM 27085 / S26/3) (Chlamydophila abortus).